The primary structure comprises 93 residues: MPRSLKKGPFVDDHLIKKVDTQNEAGTKNVIKTWSRRSMIVPAMLGHTIAVHNGKTHIPVFVTESMVGHKLGEFSPTRTFRGHVKDDRKSKRR.

The segment at 73–93 is disordered; sequence EFSPTRTFRGHVKDDRKSKRR. Residues 83–93 show a composition bias toward basic and acidic residues; the sequence is HVKDDRKSKRR.

It belongs to the universal ribosomal protein uS19 family.

In terms of biological role, protein S19 forms a complex with S13 that binds strongly to the 16S ribosomal RNA. This chain is Small ribosomal subunit protein uS19, found in Streptomyces coelicolor (strain ATCC BAA-471 / A3(2) / M145).